The sequence spans 212 residues: Imidazole glycerol phosphate synthase subunit HisH (212 aa).

The Glutamine amidotransferase type-1 domain occupies 4 to 210 (NIGIIDYGMG…LKWLHEKNSD (207 aa)). The Nucleophile role is filled by C82. Catalysis depends on residues H185 and E187.

As to quaternary structure, heterodimer of HisH and HisF.

Its subcellular location is the cytoplasm. The enzyme catalyses 5-[(5-phospho-1-deoxy-D-ribulos-1-ylimino)methylamino]-1-(5-phospho-beta-D-ribosyl)imidazole-4-carboxamide + L-glutamine = D-erythro-1-(imidazol-4-yl)glycerol 3-phosphate + 5-amino-1-(5-phospho-beta-D-ribosyl)imidazole-4-carboxamide + L-glutamate + H(+). It carries out the reaction L-glutamine + H2O = L-glutamate + NH4(+). It participates in amino-acid biosynthesis; L-histidine biosynthesis; L-histidine from 5-phospho-alpha-D-ribose 1-diphosphate: step 5/9. IGPS catalyzes the conversion of PRFAR and glutamine to IGP, AICAR and glutamate. The HisH subunit catalyzes the hydrolysis of glutamine to glutamate and ammonia as part of the synthesis of IGP and AICAR. The resulting ammonia molecule is channeled to the active site of HisF. In Prochlorococcus marinus (strain MIT 9211), this protein is Imidazole glycerol phosphate synthase subunit HisH.